Reading from the N-terminus, the 119-residue chain is Ergochrome gene cluster protein CPUR_05426 (119 aa).

It participates in pigment biosynthesis. Part of the ergochrome gene cluster responsible for the typical purple-black color of the ergot sclerotia. The ergochrome gene cluster produces several ergot pigments including the yellow ergochrome secalonic acid and its derivatives, as well as the red anthraquinones endocrocin and clavorubin. The pathway begins with the synthesis of atrochrysone thioester by the polyketide synthase (PKS) CPUR_05437. The atrochrysone carboxyl ACP thioesterase CPUR_05436 then breaks the thioester bond and releases the atrochrysone carboxylic acid from CPUR_05437. The atrochrysone carboxylic acid is then converted to atrochrysone which is further transformed into emodin anthrone. The next step is performed by the anthrone oxygenase CPUR_05434 that catalyzes the oxidation of emodinanthrone to emodin. Emodin is further modified to yield monodictyphenone via several steps involving CPUR_05427, CPUR_05428, CPUR_05429 and CPUR_05430. The short chain dehydrogenase/reductase CPUR_05418 then catalyzes the C-5 ketoreduction to give the xanthone skeleton of the monomeric units. Ergochromes formation requires further dimerization steps of different xanthone units, probably catalyzed by the cytochrome P450 monooxygenase CPUR_05419. CPUR_05425, CPUR_05426 and CPUR_05431 are unique to Claviceps, thus it is likely that they are involved in further modification of xanthone units or in their dimerization. The yellow ergochromes and the red anthraquinone pigments endocrocin and clavorubin are products from the same PKS derived precursors and the latter are likely shunt products in the pathway of xanthone biosynthesis. It is proposed that atrochrysone carboxylic acid released from the PKS CPUR_05437 can also be converted to endocrocin anthrone which is further oxidized into endocrocin by CPUR_05435. Endocrocin could be then modified to clavorubin, possibly by CPUR_05423 and CPUR_05431. Clavorubin is the principal anthraquinone metabolite produced by the cluster with a much higher yield compared to endocrocin. The protein is Ergochrome gene cluster protein CPUR_05426 of Claviceps purpurea (strain 20.1) (Ergot fungus).